The primary structure comprises 40 residues: Photosystem II reaction center protein J (40 aa).

A helical membrane pass occupies residues 8–28; the sequence is IPLWLIGTVTGIPVIGSMGIF.

Belongs to the PsbJ family. As to quaternary structure, PSII is composed of 1 copy each of membrane proteins PsbA, PsbB, PsbC, PsbD, PsbE, PsbF, PsbH, PsbI, PsbJ, PsbK, PsbL, PsbM, PsbT, PsbX, PsbY, PsbZ, Psb30/Ycf12, at least 3 peripheral proteins of the oxygen-evolving complex and a large number of cofactors. It forms dimeric complexes.

Its subcellular location is the plastid. The protein resides in the chloroplast thylakoid membrane. One of the components of the core complex of photosystem II (PSII). PSII is a light-driven water:plastoquinone oxidoreductase that uses light energy to abstract electrons from H(2)O, generating O(2) and a proton gradient subsequently used for ATP formation. It consists of a core antenna complex that captures photons, and an electron transfer chain that converts photonic excitation into a charge separation. In Illicium oligandrum (Star anise), this protein is Photosystem II reaction center protein J.